Consider the following 463-residue polypeptide: Asparagine--tRNA ligase (463 aa).

The protein belongs to the class-II aminoacyl-tRNA synthetase family. Homodimer.

It is found in the cytoplasm. The enzyme catalyses tRNA(Asn) + L-asparagine + ATP = L-asparaginyl-tRNA(Asn) + AMP + diphosphate + H(+). In Alkaliphilus oremlandii (strain OhILAs) (Clostridium oremlandii (strain OhILAs)), this protein is Asparagine--tRNA ligase.